Consider the following 90-residue polypeptide: DNA-binding protein HU-alpha (90 aa).

Belongs to the bacterial histone-like protein family. Heterodimer of an alpha and a beta chain.

Its function is as follows. Histone-like DNA-binding protein which is capable of wrapping DNA to stabilize it, and thus to prevent its denaturation under extreme environmental conditions. The sequence is that of DNA-binding protein HU-alpha (hupA) from Escherichia coli O157:H7.